The primary structure comprises 765 residues: 1,4-alpha-glucan branching enzyme GlgB (765 aa).

Residue aspartate 431 is the Nucleophile of the active site. The active-site Proton donor is glutamate 484.

The protein belongs to the glycosyl hydrolase 13 family. GlgB subfamily. Monomer.

The enzyme catalyses Transfers a segment of a (1-&gt;4)-alpha-D-glucan chain to a primary hydroxy group in a similar glucan chain.. It participates in glycan biosynthesis; glycogen biosynthesis. In terms of biological role, catalyzes the formation of the alpha-1,6-glucosidic linkages in glycogen by scission of a 1,4-alpha-linked oligosaccharide from growing alpha-1,4-glucan chains and the subsequent attachment of the oligosaccharide to the alpha-1,6 position. This chain is 1,4-alpha-glucan branching enzyme GlgB, found in Synechococcus sp. (strain CC9605).